Here is a 262-residue protein sequence, read N- to C-terminus: 1,2-epoxyphenylacetyl-CoA isomerase (262 aa).

This sequence belongs to the enoyl-CoA hydratase/isomerase family.

The enzyme catalyses 2-(1,2-epoxy-1,2-dihydrophenyl)acetyl-CoA = 2-oxepin-2(3H)-ylideneacetyl-CoA. It functions in the pathway aromatic compound metabolism; phenylacetate degradation. Its function is as follows. Catalyzes the reversible conversion of the epoxide to 2-oxepin-2(3H)-ylideneacetyl-CoA (oxepin-CoA). This Escherichia coli (strain K12) protein is 1,2-epoxyphenylacetyl-CoA isomerase (paaG).